The primary structure comprises 380 residues: tRNA-specific 2-thiouridylase MnmA (380 aa).

ATP is bound by residues 9-16 (GVSGGVDS) and Met35. Positions 94-96 (NPD) are interaction with target base in tRNA. Residue Cys99 is the Nucleophile of the active site. An intrachain disulfide couples Cys99 to Cys195. Gly123 lines the ATP pocket. An interaction with tRNA region spans residues 145 to 147 (KDQ). Cys195 (cysteine persulfide intermediate) is an active-site residue. Positions 308–309 (RY) are interaction with tRNA.

Belongs to the MnmA/TRMU family.

Its subcellular location is the cytoplasm. The enzyme catalyses S-sulfanyl-L-cysteinyl-[protein] + uridine(34) in tRNA + AH2 + ATP = 2-thiouridine(34) in tRNA + L-cysteinyl-[protein] + A + AMP + diphosphate + H(+). Its function is as follows. Catalyzes the 2-thiolation of uridine at the wobble position (U34) of tRNA, leading to the formation of s(2)U34. In Stenotrophomonas maltophilia (strain R551-3), this protein is tRNA-specific 2-thiouridylase MnmA.